Consider the following 644-residue polypeptide: Exoribonuclease 2 (644 aa).

Residues 189–516 (REDLTALNFV…NHRLLKAIIT (328 aa)) enclose the RNB domain. An S1 motif domain is found at 561–643 (DTRFTAEIID…ETRNVIARPV (83 aa)).

The protein belongs to the RNR ribonuclease family. RNase II subfamily.

Its subcellular location is the cytoplasm. It catalyses the reaction Exonucleolytic cleavage in the 3'- to 5'-direction to yield nucleoside 5'-phosphates.. In terms of biological role, involved in mRNA degradation. Hydrolyzes single-stranded polyribonucleotides processively in the 3' to 5' direction. This Yersinia pseudotuberculosis serotype O:3 (strain YPIII) protein is Exoribonuclease 2.